The primary structure comprises 133 residues: Small ribosomal subunit protein uS8 (133 aa).

It belongs to the universal ribosomal protein uS8 family. Part of the 30S ribosomal subunit. Contacts proteins S5 and S12.

Functionally, one of the primary rRNA binding proteins, it binds directly to 16S rRNA central domain where it helps coordinate assembly of the platform of the 30S subunit. The sequence is that of Small ribosomal subunit protein uS8 from Chlamydia caviae (strain ATCC VR-813 / DSM 19441 / 03DC25 / GPIC) (Chlamydophila caviae).